A 350-amino-acid polypeptide reads, in one-letter code: Mannonate dehydratase (350 aa).

Belongs to the mannonate dehydratase family. Fe(2+) serves as cofactor. It depends on Mn(2+) as a cofactor.

The enzyme catalyses D-mannonate = 2-dehydro-3-deoxy-D-gluconate + H2O. It participates in carbohydrate metabolism; pentose and glucuronate interconversion. Functionally, catalyzes the dehydration of D-mannonate. The sequence is that of Mannonate dehydratase from Clostridium perfringens (strain 13 / Type A).